The sequence spans 236 residues: Syntaxin-8 (236 aa).

Residues 1-215 (MAPDPWFSTY…LVDRKSTSCG (215 aa)) lie on the Cytoplasmic side of the membrane. Positions 42 to 65 (LTIRTLLKNLKVKIDLLKDLLLRA) form a coiled coil. The t-SNARE coiled-coil homology domain occupies 145–207 (QKIIQEQDAG…RTEARRVTLV (63 aa)). Position 160 is a phosphoserine (serine 160). The helical; Anchor for type IV membrane protein transmembrane segment at 216 to 232 (MIMVILLLLVAIVVVAV) threads the bilayer. At 233–236 (WPTN) the chain is on the vesicular side.

It belongs to the syntaxin family. Forms a SNARE complex with STX7, VTI1B and VAMP8 which functions in the homotypic fusion of late endosomes. Part of the SNARE core complex containing STX7, VAMP8 and VTI1B. Interacts with VAMP8. Interacts with HECTD3. Interacts with TPC1. Ubiquitinated by HECTD3.

It is found in the membrane. Vesicle trafficking protein that functions in the early secretory pathway, possibly by mediating retrograde transport from cis-Golgi membranes to the ER. This chain is Syntaxin-8 (Stx8), found in Mus musculus (Mouse).